The chain runs to 202 residues: MSRYRGPRVRIIRRLGTLPGLTNKTPQLKSGSINQSTSNKKISQYRIRLEEKQKLRFHYGITERQLLNYVRIARRAKGSTGEVLLQLLEMRLDNVIFRLGMAPTIPGARQLVNHRHILVNDYIVDIPSYRCKPQDFITIKNQQKSETIISKNIEFYQKYKIPNHLTYSSLEKKGLVNQILDRESIGLKINELLVVEYYSRQA.

Residues 90 to 153 (MRLDNVIFRL…KSETIISKNI (64 aa)) enclose the S4 RNA-binding domain.

The protein belongs to the universal ribosomal protein uS4 family. As to quaternary structure, part of the 30S ribosomal subunit. Contacts protein S5. The interaction surface between S4 and S5 is involved in control of translational fidelity.

The protein resides in the plastid. It localises to the chloroplast. Functionally, one of the primary rRNA binding proteins, it binds directly to 16S rRNA where it nucleates assembly of the body of the 30S subunit. Its function is as follows. With S5 and S12 plays an important role in translational accuracy. The protein is Small ribosomal subunit protein uS4c (rps4) of Hylocomium splendens (Glittering wood-moss).